Consider the following 648-residue polypeptide: MKTLSIDIETFSSVDLLKAGVYAYTEAPDFEILLFAYAFDDDPVKIIDLAQGDTLPHEVLVALTSSKVIKTAYNANFERTCIAKHFNLMLLPAQWRCTAVHATTLGLPGNLDGVAKALKLSAQKDKAGKALIRYFSVPCKPTKANGQRVRNLPEHDPEKWEKFKVYCIQDVEVERAIKNRISKFEPLESEHKLWALDQEINDRGVRIDVDLVKHAIACDEQYQAGLIAEAKKLTGLPNPNSTAQLKKWLEEKGLTISSLAKDKIEELIENTNDETVHRVLRLRQEMAKTSVKKYLAMEKALCPDNRVRGLLQFYGASRTGRWAGRLVQVQNLPQNKIEDLDTARNLLKGGHYEAIELLYGQVPFVLSQLVRTAFIPSEGNEFYVSDFSAIEARVIAWLAGEEWRLEVFNTHGKIYEASAAQMFKVPVESITKGSPLRQKGKVAELALGYQGGKGALIQMGALNMGLAEGELPELVKAWRTANKKIVKFWYDVEAAAIKAVKERKPVKLQHGLTFLYESGILFVQLPSGRRLAYAKPKLELDERFGKEALTYEGKLESGKWGRLNTYGGKLVENIVQATARDCLAITLMRLDNAGYKTVMHVHDEAVLDVPRGKNELDKVEAIMGEPISWAKGLPLTADGFVTDYYKKD.

Belongs to the DNA polymerase type-A family.

The catalysed reaction is DNA(n) + a 2'-deoxyribonucleoside 5'-triphosphate = DNA(n+1) + diphosphate. Its function is as follows. Replicates the viral genomic DNA. This polymerase possesses two enzymatic activities: DNA synthesis (polymerase) and an exonucleolytic activity that degrades single-stranded DNA in the 3'-5' direction. This Bacillus subtilis (Bacteriophage SP02) protein is DNA polymerase (L).